Here is a 36-residue protein sequence, read N- to C-terminus: Alpha-amylase inhibitor AI-3688 (36 aa).

Cysteine 9 and cysteine 25 are joined by a disulfide.

In terms of biological role, inhibits mammalian alpha-amylases specifically but has no action on plant and microbial alpha-amylases. The protein is Alpha-amylase inhibitor AI-3688 of Kitasatospora aureofaciens (Streptomyces aureofaciens).